A 249-amino-acid polypeptide reads, in one-letter code: 2,3-bisphosphoglycerate-dependent phosphoglycerate mutase (249 aa).

Residues 9-16 (RHGQSQWN), 22-23 (TG), Arg-61, 88-91 (ERHY), Lys-99, 115-116 (RR), and 184-185 (GN) each bind substrate. His-10 acts as the Tele-phosphohistidine intermediate in catalysis. Residue Glu-88 is the Proton donor/acceptor of the active site.

This sequence belongs to the phosphoglycerate mutase family. BPG-dependent PGAM subfamily. As to quaternary structure, homodimer.

It carries out the reaction (2R)-2-phosphoglycerate = (2R)-3-phosphoglycerate. The protein operates within carbohydrate degradation; glycolysis; pyruvate from D-glyceraldehyde 3-phosphate: step 3/5. Functionally, catalyzes the interconversion of 2-phosphoglycerate and 3-phosphoglycerate. This is 2,3-bisphosphoglycerate-dependent phosphoglycerate mutase from Xanthomonas oryzae pv. oryzae (strain PXO99A).